The sequence spans 431 residues: Protein S-Myc (431 aa).

Tyr36 carries the post-translational modification Phosphotyrosine; by Tyr-kinases. The bHLH domain occupies 348 to 400; that stretch reads ERRRNHNRMERQRRDIMRSSFLNLRDLVPELVHNEKAAKVVILKKATEYIHTL. The segment at 400-421 is leucine-zipper; the sequence is LQADESKLLVERKKLYERQQQL.

As to quaternary structure, efficient DNA binding requires dimerization with another bHLH protein.

It localises to the nucleus. Has apoptosis-inducing activity. This Mus musculus (Mouse) protein is Protein S-Myc (Mycs).